Reading from the N-terminus, the 276-residue chain is Glutamate racemase (276 aa).

Substrate is bound by residues 10–11 (DS) and 42–43 (YG). The Proton donor/acceptor role is filled by C74. 75–76 (NT) lines the substrate pocket. C185 acts as the Proton donor/acceptor in catalysis. 186 to 187 (TH) contacts substrate.

This sequence belongs to the aspartate/glutamate racemases family.

It catalyses the reaction L-glutamate = D-glutamate. It participates in cell wall biogenesis; peptidoglycan biosynthesis. Provides the (R)-glutamate required for cell wall biosynthesis. The sequence is that of Glutamate racemase from Levilactobacillus brevis (strain ATCC 367 / BCRC 12310 / CIP 105137 / JCM 1170 / LMG 11437 / NCIMB 947 / NCTC 947) (Lactobacillus brevis).